Reading from the N-terminus, the 336-residue chain is Dihydroorotate dehydrogenase (quinone) (336 aa).

FMN-binding positions include 62–66 (AGLDK) and T86. K66 contacts substrate. 111–115 (NRFGF) provides a ligand contact to substrate. 2 residues coordinate FMN: N139 and N172. N172 is a substrate binding site. S175 acts as the Nucleophile in catalysis. N177 is a binding site for substrate. 2 residues coordinate FMN: K217 and T245. A substrate-binding site is contributed by 246-247 (NT). Residues G268, G297, and 318–319 (YS) contribute to the FMN site.

Belongs to the dihydroorotate dehydrogenase family. Type 2 subfamily. In terms of assembly, monomer. Requires FMN as cofactor.

It is found in the cell membrane. It catalyses the reaction (S)-dihydroorotate + a quinone = orotate + a quinol. It functions in the pathway pyrimidine metabolism; UMP biosynthesis via de novo pathway; orotate from (S)-dihydroorotate (quinone route): step 1/1. Functionally, catalyzes the conversion of dihydroorotate to orotate with quinone as electron acceptor. The polypeptide is Dihydroorotate dehydrogenase (quinone) (Photobacterium profundum (strain SS9)).